We begin with the raw amino-acid sequence, 329 residues long: uncharacterized protein (329 aa).

Positions Leu-56–Leu-247 form a coiled coil.

This is an uncharacterized protein from Bos taurus (Bovine).